The sequence spans 352 residues: Putative killer cell immunoglobulin-like receptor-like protein KIR3DX1 (352 aa).

The first 16 residues, 1–16 (MAPKLITVLCLGFCLN), serve as a signal peptide directing secretion. 2 consecutive Ig-like C2-type domains span residues 17 to 112 (QKIC…NSLK) and 224 to 311 (PSLS…VTRC). Cystine bridges form between Cys49–Cys94 and Cys244–Cys295. Asn78 is a glycosylation site (N-linked (GlcNAc...) asparagine).

In terms of tissue distribution, expressed in NK-cells.

It localises to the secreted. This chain is Putative killer cell immunoglobulin-like receptor-like protein KIR3DX1 (KIR3DX1), found in Homo sapiens (Human).